The following is a 174-amino-acid chain: MNRDNKQELVTQMHERLSRAKAVFLADFRGMAVGQATSLRNELRGASVEYKVFKNTLLDLAAKGTDVECISPYLAGPTAIAISYDDPVSAAKVLSKFAKDPAGKFVLKAGVLSGKLLDVTQIQALADLPSREVLIAKMLGSMQAPATNFVGVLAALPGSLVRVLDAIRAQKADN.

Belongs to the universal ribosomal protein uL10 family. As to quaternary structure, part of the ribosomal stalk of the 50S ribosomal subunit. The N-terminus interacts with L11 and the large rRNA to form the base of the stalk. The C-terminus forms an elongated spine to which L12 dimers bind in a sequential fashion forming a multimeric L10(L12)X complex.

Its function is as follows. Forms part of the ribosomal stalk, playing a central role in the interaction of the ribosome with GTP-bound translation factors. The chain is Large ribosomal subunit protein uL10 from Pelobacter propionicus (strain DSM 2379 / NBRC 103807 / OttBd1).